Reading from the N-terminus, the 273-residue chain is 4-hydroxy-tetrahydrodipicolinate reductase (273 aa).

Residues 12-17 (GAGGRM) and Glu38 each bind NAD(+). Arg39 provides a ligand contact to NADP(+). NAD(+) is bound by residues 102–104 (GTT) and 126–129 (AANF). The active-site Proton donor/acceptor is His159. His160 contacts (S)-2,3,4,5-tetrahydrodipicolinate. Catalysis depends on Lys163, which acts as the Proton donor. Position 169–170 (169–170 (GT)) interacts with (S)-2,3,4,5-tetrahydrodipicolinate.

It belongs to the DapB family. Homotetramer.

The protein resides in the cytoplasm. It carries out the reaction (S)-2,3,4,5-tetrahydrodipicolinate + NAD(+) + H2O = (2S,4S)-4-hydroxy-2,3,4,5-tetrahydrodipicolinate + NADH + H(+). The catalysed reaction is (S)-2,3,4,5-tetrahydrodipicolinate + NADP(+) + H2O = (2S,4S)-4-hydroxy-2,3,4,5-tetrahydrodipicolinate + NADPH + H(+). Its pathway is amino-acid biosynthesis; L-lysine biosynthesis via DAP pathway; (S)-tetrahydrodipicolinate from L-aspartate: step 4/4. Functionally, catalyzes the conversion of 4-hydroxy-tetrahydrodipicolinate (HTPA) to tetrahydrodipicolinate. The protein is 4-hydroxy-tetrahydrodipicolinate reductase of Klebsiella pneumoniae (strain 342).